We begin with the raw amino-acid sequence, 269 residues long: 4-hydroxy-tetrahydrodipicolinate reductase (269 aa).

NAD(+)-binding positions include 10–15 (GANGRM), glutamate 36, 99–101 (GTT), and 123–126 (AANF). The Proton donor/acceptor role is filled by histidine 156. Residue histidine 157 participates in (S)-2,3,4,5-tetrahydrodipicolinate binding. The active-site Proton donor is lysine 160. 166-167 (GT) is a binding site for (S)-2,3,4,5-tetrahydrodipicolinate.

It belongs to the DapB family.

It is found in the cytoplasm. The catalysed reaction is (S)-2,3,4,5-tetrahydrodipicolinate + NAD(+) + H2O = (2S,4S)-4-hydroxy-2,3,4,5-tetrahydrodipicolinate + NADH + H(+). It catalyses the reaction (S)-2,3,4,5-tetrahydrodipicolinate + NADP(+) + H2O = (2S,4S)-4-hydroxy-2,3,4,5-tetrahydrodipicolinate + NADPH + H(+). It participates in amino-acid biosynthesis; L-lysine biosynthesis via DAP pathway; (S)-tetrahydrodipicolinate from L-aspartate: step 4/4. In terms of biological role, catalyzes the conversion of 4-hydroxy-tetrahydrodipicolinate (HTPA) to tetrahydrodipicolinate. This chain is 4-hydroxy-tetrahydrodipicolinate reductase, found in Neisseria meningitidis serogroup A / serotype 4A (strain DSM 15465 / Z2491).